The primary structure comprises 446 residues: MSNTVFIGAKEYFPGIGKIGFEGRDSDNPLAFKVYDANKQVAGKSMAEHLRFAVAYWHSFCGNGADPFGPGTRAYPWDVGNTALARAEAKSDAAFEFFTKLGVPYYCFHDIDLAPDADDIGEYENNLKHMVRIAKQRQADTGVKLLWGTANLFSHPRYMNGASTNPDFNVVARAAVQVKAAIDATVELGGENYVFWGGREGYACLHNTQMKREQDNMARFLTLARDYGRAIGFTGNFLIEPKPMEPMKHQYDFDSATVIGFLHQHGLDQDFKLNIEANHATLSGHSFEHDLQVASDAGLLGSIDANRGNPQNGWDTDQFPTDLYDTVGAMLVVLRQGGLAPGGLNFDAKVRRESSDPQDLFLAHIGGMDAFARGLEVADALLTSSPLETWRAQRYASFDSGAGADFANGTSTLADLAKYAAGRGEPTQVSGRQEAYENLINQYLTR.

Residues histidine 109 and aspartate 112 contribute to the active site. Mg(2+) contacts are provided by glutamate 240, glutamate 276, histidine 279, aspartate 304, aspartate 315, aspartate 317, and aspartate 347.

This sequence belongs to the xylose isomerase family. Homotetramer. Mg(2+) serves as cofactor.

The protein localises to the cytoplasm. It carries out the reaction alpha-D-xylose = alpha-D-xylulofuranose. The polypeptide is Xylose isomerase 1 (Xanthomonas campestris pv. campestris (strain 8004)).